The following is a 45-amino-acid chain: Endo-1,4-beta-xylanase Xyn10A (45 aa).

It belongs to the glycosyl hydrolase 10 (cellulase F) family.

The protein localises to the secreted. The protein resides in the extracellular space. The enzyme catalyses Endohydrolysis of (1-&gt;4)-beta-D-xylosidic linkages in xylans.. It catalyses the reaction Endohydrolysis of (1-&gt;4)-beta-D-glucosidic linkages in cellulose, lichenin and cereal beta-D-glucans.. Its pathway is glycan degradation; xylan degradation. Has xylanase, avicelase and cellobiohydrolase activity. This chain is Endo-1,4-beta-xylanase Xyn10A, found in Gloeophyllum trabeum (Brown rot fungus).